Here is a 322-residue protein sequence, read N- to C-terminus: Large ribosomal subunit protein uL10 (322 aa).

The interval 294 to 322 is disordered; it reads APAAAAKAEKEEEPAEESDDEMGFGLFDE. Residues 304-322 are compositionally biased toward acidic residues; it reads EEEPAEESDDEMGFGLFDE.

It belongs to the universal ribosomal protein uL10 family. As to quaternary structure, P0 forms a pentameric complex by interaction with dimers of P1 and P2. Post-translationally, phosphorylated.

In terms of biological role, ribosomal protein P0 is the functional equivalent of E.coli protein L10. This Lupinus luteus (European yellow lupine) protein is Large ribosomal subunit protein uL10.